A 360-amino-acid chain; its full sequence is DNA replication and repair protein RecF (360 aa).

33-40 is an ATP binding site; it reads GENGSGKT.

Belongs to the RecF family.

It localises to the cytoplasm. Its function is as follows. The RecF protein is involved in DNA metabolism; it is required for DNA replication and normal SOS inducibility. RecF binds preferentially to single-stranded, linear DNA. It also seems to bind ATP. The chain is DNA replication and repair protein RecF from Rickettsia africae (strain ESF-5).